The sequence spans 132 residues: MAITKSKQQKTRKKVKRVVSDGIVHIHASFNNTIVTFTDRQGNALCWATSGGSGFRGSRKSTPYAAQVATERAAAVAKEYGMKSVAVFVHGPGPGRESTIRELITQDFKIVEITDVTGIPHNGCKPPKKRRV.

The protein belongs to the universal ribosomal protein uS11 family. As to quaternary structure, part of the 30S ribosomal subunit. Interacts with proteins S7 and S18. Binds to IF-3.

In terms of biological role, located on the platform of the 30S subunit, it bridges several disparate RNA helices of the 16S rRNA. Forms part of the Shine-Dalgarno cleft in the 70S ribosome. In Legionella pneumophila (strain Paris), this protein is Small ribosomal subunit protein uS11.